Here is a 279-residue protein sequence, read N- to C-terminus: tRNA (guanine-N(1)-)-methyltransferase (279 aa).

S-adenosyl-L-methionine is bound by residues glycine 132 and 152–157 (IGDYVL).

The protein belongs to the RNA methyltransferase TrmD family. As to quaternary structure, homodimer.

The protein localises to the cytoplasm. The enzyme catalyses guanosine(37) in tRNA + S-adenosyl-L-methionine = N(1)-methylguanosine(37) in tRNA + S-adenosyl-L-homocysteine + H(+). Functionally, specifically methylates guanosine-37 in various tRNAs. The chain is tRNA (guanine-N(1)-)-methyltransferase from Saccharophagus degradans (strain 2-40 / ATCC 43961 / DSM 17024).